A 389-amino-acid chain; its full sequence is Trans-2-enoyl-CoA reductase [NADH] (389 aa).

NAD(+) is bound by residues 47 to 52 (GASTGY), 73 to 74 (FE), 110 to 111 (DA), and 138 to 139 (LA). Residue Tyr224 participates in substrate binding. Tyr234 serves as the catalytic Proton donor. NAD(+) contacts are provided by residues Lys243 and 272–274 (LVT).

It belongs to the TER reductase family. As to quaternary structure, monomer.

It carries out the reaction a 2,3-saturated acyl-CoA + NAD(+) = a (2E)-enoyl-CoA + NADH + H(+). Its pathway is lipid metabolism; fatty acid biosynthesis. In terms of biological role, involved in the fatty acid synthesis (FAS II). Catalyzes the reduction of a carbon-carbon double bond in an enoyl moiety that is covalently linked to a coenzyme A (CoA). The polypeptide is Trans-2-enoyl-CoA reductase [NADH] (Clostridium perfringens (strain 13 / Type A)).